We begin with the raw amino-acid sequence, 247 residues long: Small ribosomal subunit protein uS3 (247 aa).

The 69-residue stretch at 39–107 folds into the KH type-2 domain; that stretch reads VRDYLRKKLD…PAQVNIEEIT (69 aa). Residues 213 to 247 are disordered; that stretch reads SVYNPPKEDKTRAPKRRGRSNSNRRNSDRANTDRG. Residues 237 to 247 show a composition bias toward basic and acidic residues; sequence RNSDRANTDRG.

It belongs to the universal ribosomal protein uS3 family. Part of the 30S ribosomal subunit. Forms a tight complex with proteins S10 and S14.

Functionally, binds the lower part of the 30S subunit head. Binds mRNA in the 70S ribosome, positioning it for translation. The polypeptide is Small ribosomal subunit protein uS3 (Psychrobacter sp. (strain PRwf-1)).